Reading from the N-terminus, the 456-residue chain is F-box/FBD/LRR-repeat protein At1g13780 (456 aa).

Positions 9–55 (FDRISELPESLISQILLHLPTKASVKTSVLSTRWKNLWLNVPGLDLN) constitute an F-box domain. 4 LRR repeats span residues 197–220 (LEELIYLHDDKLVVTRVRSRSLKR), 243–266 (APGLEYMSLKADHFDRIVVKNLTS), 302–325 (ISSVRHMVISHNTVKALDLYSKVG), and 355–379 (FPNLKHLILETECPVEVMEKFELVN). The 53-residue stretch at 372-424 (MEKFELVNVPRCFVSTLEHVEIKGLFDWGEQDMKIASYFLENSAVLKKLILSF) folds into the FBD domain.

The polypeptide is F-box/FBD/LRR-repeat protein At1g13780 (Arabidopsis thaliana (Mouse-ear cress)).